A 306-amino-acid chain; its full sequence is NAD kinase 1 (306 aa).

The active-site Proton acceptor is aspartate 67. NAD(+) contacts are provided by residues 67–68 (DG), 149–150 (NE), and aspartate 181.

It belongs to the NAD kinase family. A divalent metal cation is required as a cofactor.

The protein localises to the cytoplasm. It catalyses the reaction NAD(+) + ATP = ADP + NADP(+) + H(+). Involved in the regulation of the intracellular balance of NAD and NADP, and is a key enzyme in the biosynthesis of NADP. Catalyzes specifically the phosphorylation on 2'-hydroxyl of the adenosine moiety of NAD to yield NADP. In Thermosynechococcus vestitus (strain NIES-2133 / IAM M-273 / BP-1), this protein is NAD kinase 1.